A 455-amino-acid polypeptide reads, in one-letter code: Homogentisate 1,2-dioxygenase (455 aa).

The Proton acceptor role is filled by His308. 2 residues coordinate Fe cation: His351 and Glu357. 2 residues coordinate homogentisate: Tyr366 and His387. Residue His387 coordinates Fe cation.

Belongs to the homogentisate dioxygenase family. In terms of assembly, hexamer; dimer of trimers. The cofactor is Fe cation.

It carries out the reaction homogentisate + O2 = 4-maleylacetoacetate + H(+). It functions in the pathway amino-acid degradation; L-phenylalanine degradation; acetoacetate and fumarate from L-phenylalanine: step 4/6. Involved in the catabolism of homogentisate (2,5-dihydroxyphenylacetate or 2,5-OH-PhAc), a central intermediate in the degradation of phenylalanine and tyrosine. Catalyzes the oxidative ring cleavage of the aromatic ring of homogentisate to yield maleylacetoacetate. The sequence is that of Homogentisate 1,2-dioxygenase from Xanthomonas campestris pv. campestris (strain 8004).